Consider the following 349-residue polypeptide: Achromobactin transport system permease protein CbrC (349 aa).

10 consecutive transmembrane segments (helical) span residues 32-52 (LALLLVLAVMVASLGVGKLML), 82-102 (VLAALVGGALAVSGLILQAMI), 111-131 (ILGITSGASAAAVFYLSFLAA), 138-158 (LPLAAMIGAATAALAVYWLAW), 168-188 (VLTGVGVSALLMAATTFMLVF), 190-210 (PLTTTLSAYVWLTGSVYGASW), 216-236 (LGGWLLLIAPWLVLLARQVRV), 263-283 (VALAGAAIAWGGAMAFVGLIA), 290-310 (LVAPGFAGQAAMAFLSGAGLV), and 325-345 (DLPAGIFVSALGAPFFLYLLI).

Belongs to the binding-protein-dependent transport system permease family. FecCD subfamily.

It localises to the cell inner membrane. Its function is as follows. Part of the binding-protein-dependent transport system CbrABCD for uptake of the siderophore achromobactin. Probably responsible for the translocation of the substrate across the membrane. The chain is Achromobactin transport system permease protein CbrC (cbrC) from Dickeya dadantii (strain 3937) (Erwinia chrysanthemi (strain 3937)).